Consider the following 283-residue polypeptide: Movement protein (283 aa).

Residues 233–283 (SVKRTKSENTPGKRRVNVDSVSLGLGKGKSVSAKNEDTESVFDDGILDSDS) are disordered. Acidic residues predominate over residues 270-283 (TESVFDDGILDSDS).

Belongs to the tobamovirus movement protein family.

The protein resides in the host cytoplasm. It is found in the host cytoskeleton. The protein localises to the host cell junction. It localises to the host plasmodesma. Functionally, transports viral genome to neighboring plant cells directly through plasmosdesmata, without any budding. The movement protein allows efficient cell to cell propagation, by bypassing the host cell wall barrier. Forms a ribonucleoprotein complex with viral RNA. Binds microtubules and modulates microtubule stability. Can bind double-stranded DNA. This Crotalaria juncea (Sunn hemp) protein is Movement protein (MP).